We begin with the raw amino-acid sequence, 1478 residues long: Adhesion G protein-coupled receptor L2 (1478 aa).

Residues 1–25 (MVSSGCRMRSLWFIIIISFLPNTEG) form the signal peptide. At 26–855 (FSRAALPFGL…VHELLLTVIT (830 aa)) the chain is on the extracellular side. The SUEL-type lectin domain occupies 41–130 (SCEGYSIDLR…KYLEVQYECV (90 aa)). An N-linked (GlcNAc...) asparagine glycan is attached at N99. Positions 139-398 (VCPGTLKAIV…ILRYSLEFGP (260 aa)) constitute an Olfactomedin-like domain. Cysteines 140 and 322 form a disulfide. An N-linked (GlcNAc...) asparagine glycan is attached at N335. A disordered region spans residues 422-458 (VSTTSTTSQKGPMSTTVAGSQEGSKGTKAPPAVSTTK). Positions 430–445 (QKGPMSTTVAGSQEGS) are enriched in polar residues. 7 N-linked (GlcNAc...) asparagine glycosylation sites follow: N524, N633, N735, N748, N791, N796, and N817. One can recognise a GAIN-B domain in the interval 663–841 (TRVSMPTENI…AILMAHREIA (179 aa)). Intrachain disulfides connect C792-C823 and C811-C825. The GPS stretch occupies residues 792–841 (CSFWNYSERTMMGYWSTQGCKLVDTNKTRTTCACSHLTNFAILMAHREIA). The helical transmembrane segment at 856–876 (WVGIVISLVCLAICIFTFCFF) threads the bilayer. Topologically, residues 877–884 (RGLQSDRN) are cytoplasmic. The chain crosses the membrane as a helical span at residues 885-905 (TIHKNLCINLFIAEFIFLIGI). The Extracellular segment spans residues 906 to 911 (DKTKYM). The helical transmembrane segment at 912–932 (IACPIFAGLLHFFFLAAFAWM) threads the bilayer. The Cytoplasmic portion of the chain corresponds to 933–955 (CLEGVQLYLMLVEVFESEYSRKK). The helical transmembrane segment at 956–976 (YYYVAGYLFPATVVGVSAAID) threads the bilayer. At 977–994 (YKSYGTEKACWLHVDNYF) the chain is on the extracellular side. Residues 995–1015 (IWSFIGPVTFIILLNIIFLVI) traverse the membrane as a helical segment. Residues 1016-1056 (TLCKMVKHSNTLKPDSSRLENINNYRVCDGYYNTDLPGSWV) are Cytoplasmic-facing. Residues 1057 to 1077 (LGAFALLCLLGLTWSFGLLFI) traverse the membrane as a helical segment. Over 1078–1081 (NEET) the chain is Extracellular. Residues 1082-1102 (IVMAYLFTIFNAFQGVFIFIF) form a helical membrane-spanning segment. Residues 1103-1478 (HCALQKKVRK…EGQMQLVTSL (376 aa)) are Cytoplasmic-facing. Positions 1378–1419 (AEDHLQSPNRDSLYTSMPNLRDSPYQESSPDMEEDLSPSRRS) are disordered. Polar residues predominate over residues 1383–1395 (QSPNRDSLYTSMP). S1393, S1428, and S1449 each carry phosphoserine.

The protein belongs to the G-protein coupled receptor 2 family. Adhesion G-protein coupled receptor (ADGR) subfamily. In terms of assembly, heterodimer of 2 chains generated by proteolytic processing; the large extracellular N-terminal fragment and the membrane-bound C-terminal fragment predominantly remain associated and non-covalently linked. Autoproteolytically processed at the GPS region of the GAIN-B domain; this cleavage modulates receptor activity. In terms of tissue distribution, ubiquitously expressed.

It localises to the postsynaptic cell membrane. Forms a heterodimer of 2 chains generated by proteolytic processing that remain associated through non-covalent interactions mediated by the GAIN-B domain. In the inactivated receptor, the Stachel sequence (also named stalk) is embedded in the GAIN-B domain, where it adopts a beta-strand conformation. On activation, the Stachel moves into the 7 transmembrane region and adopts a twisted hook-shaped configuration that forms contacts within the receptor, leading to coupling of a G-alpha protein, which activates signaling. The cleaved GAIN-B and N-terminal domains can then dissociate from the rest of the receptor. Its function is as follows. Orphan adhesion G-protein coupled receptor (aGPCR), which mediates synapse specificity. Ligand binding causes a conformation change that triggers signaling via guanine nucleotide-binding proteins (G proteins) and modulates the activity of downstream effectors. Following G-protein coupled receptor activation, associates with cell adhesion molecules that are expressed at the surface of adjacent cells to direct synapse specificity. Specifically mediates the establishment of perforant-path synapses on CA1-region pyramidal neurons in the hippocampus. Localizes to postsynaptic spines in excitatory synapses in the S.lacunosum-moleculare and interacts with presynaptic cell adhesion molecules, such as teneurins, promoting synapse formation. The polypeptide is Adhesion G protein-coupled receptor L2 (ADGRL2) (Bos taurus (Bovine)).